The sequence spans 281 residues: MSRKEIYEPRPRYPDGYNGNRAVKKSLSVLSLDNMKSTLSGLFAPLKLDEEQAEDDESLSSYEDYASRQIDDDLKKQRKKGITFIDYSSLITFFCKLCVIFGLGFVFTYLAEQIVQDAKLPLLTVNLKSWKFEPPWPAIFGFVAVILGLSYRRMDTKYPLGAAPLRPSQSSKWQWISRYLAAFATLLLSMKKLLFISNSHSIVALVASSASIWYIFDRSRNGIILSTITSVLGSILYYNLVDTSKIELNGVEFPEIQFRLWIPMILFSASTIVGNAGRLLF.

Residues 1–93 (MSRKEIYEPR…FIDYSSLITF (93 aa)) lie on the Cytoplasmic side of the membrane. Ser28 bears the Phosphoserine mark. The chain crosses the membrane as a helical span at residues 94–120 (FCKLCVIFGLGFVFTYLAEQIVQDAKL). Residues 121-134 (PLLTVNLKSWKFEP) are Lumenal-facing. Residues 135 to 159 (PWPAIFGFVAVILGLSYRRMDTKYP) form a helical membrane-spanning segment. Over 160–170 (LGAAPLRPSQS) the chain is Cytoplasmic. The helical transmembrane segment at 171–186 (SKWQWISRYLAAFATL) threads the bilayer. At 187 to 189 (LLS) the chain is on the lumenal side. The chain crosses the membrane as a helical span at residues 190–215 (MKKLLFISNSHSIVALVASSASIWYI). Topologically, residues 216-221 (FDRSRN) are cytoplasmic. A helical membrane pass occupies residues 222-256 (GIILSTITSVLGSILYYNLVDTSKIELNGVEFPEI). Over 257-260 (QFRL) the chain is Lumenal. Residues 261–281 (WIPMILFSASTIVGNAGRLLF) traverse the membrane as a helical segment.

It belongs to the INSIG family.

It localises to the endoplasmic reticulum membrane. The polypeptide is INSIG family protein (ins1) (Schizosaccharomyces pombe (strain 972 / ATCC 24843) (Fission yeast)).